Reading from the N-terminus, the 418-residue chain is Tubulin alpha chain (418 aa).

GTP contacts are provided by glutamine 11, glutamate 71, serine 140, glycine 144, threonine 179, asparagine 206, and asparagine 228. Glutamate 71 is a Mg(2+) binding site. Glutamate 255 is an active-site residue.

This sequence belongs to the tubulin family. Dimer of alpha and beta chains. A typical microtubule is a hollow water-filled tube with an outer diameter of 25 nm and an inner diameter of 15 nM. Alpha-beta heterodimers associate head-to-tail to form protofilaments running lengthwise along the microtubule wall with the beta-tubulin subunit facing the microtubule plus end conferring a structural polarity. Microtubules usually have 13 protofilaments but different protofilament numbers can be found in some organisms and specialized cells. The cofactor is Mg(2+).

Its subcellular location is the cytoplasm. It localises to the cytoskeleton. The catalysed reaction is GTP + H2O = GDP + phosphate + H(+). Tubulin is the major constituent of microtubules, a cylinder consisting of laterally associated linear protofilaments composed of alpha- and beta-tubulin heterodimers. Microtubules grow by the addition of GTP-tubulin dimers to the microtubule end, where a stabilizing cap forms. Below the cap, tubulin dimers are in GDP-bound state, owing to GTPase activity of alpha-tubulin. In Ajellomyces capsulatus (Darling's disease fungus), this protein is Tubulin alpha chain (TUB1).